We begin with the raw amino-acid sequence, 390 residues long: Putative transposase y4qE (390 aa).

This sequence belongs to the transposase IS1111A/IS1328/IS1533 family.

The polypeptide is Putative transposase y4qE (Sinorhizobium fredii (strain NBRC 101917 / NGR234)).